Consider the following 335-residue polypeptide: Transcription factor bHLH63 (335 aa).

Residues 110 to 160 form a disordered region; it reads MTMNRDDLVEEGEEEKSKITEQNNGSTKSIKKMKHKAKKEENNFSNDSSKV. Positions 178-228 constitute a bHLH domain; it reads QATDSHSIAERVRREKISERMKFLQDLVPGCDKITGKAGMLDEIINYVQSL.

As to quaternary structure, homodimer. Interacts with IBH1. Binds reversibly to CRY2 after blue light illumination. In terms of tissue distribution, expressed constitutively in roots, leaves, and stems.

It localises to the nucleus. Its function is as follows. Transcription factor that binds DNA to G box 5'-CACGTG-3' and, to a lower extent, to E-box 5'-CANNTG-3' in vitro. Binds to chromatin DNA of the FT gene and promotes its expression, and thus triggers flowering in response to blue light. The protein is Transcription factor bHLH63 (BHLH63) of Arabidopsis thaliana (Mouse-ear cress).